A 1282-amino-acid chain; its full sequence is Ribosome biogenesis protein BMS1 homolog (1282 aa).

Residues 1–24 (MEAKDQKKHRKKNSGPKAAKKKKR) are compositionally biased toward basic residues. The tract at residues 1–43 (MEAKDQKKHRKKNSGPKAAKKKKRLLQDLQLGDEEDARKRNPK) is disordered. Lys43 is covalently cross-linked (Glycyl lysine isopeptide (Lys-Gly) (interchain with G-Cter in SUMO2)). Residues 80-245 (PPPIVVVVMG…GRFITVMKFR (166 aa)) form the Bms1-type G domain. The tract at residues 89–96 (GPPKVGKS) is G1. 89-96 (GPPKVGKS) contacts ATP. The G2 stretch occupies residues 117–121 (PVTIV). The segment at 132-135 (ECGC) is G3. A G4 region spans residues 184–187 (THLD). A Phosphoserine modification is found at Ser188. Positions 219 to 228 (LSGMVHGEYQ) are G5. Disordered stretches follow at residues 397–557 (DSKP…ANCQ) and 575–667 (PTFD…ALKW). Residues Lys399 and Lys415 each participate in a glycyl lysine isopeptide (Lys-Gly) (interchain with G-Cter in SUMO2) cross-link. Acidic residues-rich tracts occupy residues 434–472 (GDED…ENAE) and 503–531 (DSDD…EDCT). Residues 535-550 (KGISGSKAAGEGSKAG) are compositionally biased toward low complexity. A Phosphoserine modification is found at Ser552. The span at 588–610 (FASEDESEESSSLSAEEEDSENE) shows a compositional bias: acidic residues. Phosphoserine occurs at positions 625 and 639. A Glycyl lysine isopeptide (Lys-Gly) (interchain with G-Cter in SUMO2) cross-link involves residue Lys646. Residues 653–667 (EENNDSKETSGALKW) are compositionally biased toward basic and acidic residues. Position 708 is a phosphothreonine (Thr708). Disordered stretches follow at residues 787-822 (ETGD…ESAK) and 1178-1202 (NKPK…IREP). Lys810 is covalently cross-linked (Glycyl lysine isopeptide (Lys-Gly) (interchain with G-Cter in SUMO1); alternate). A Glycyl lysine isopeptide (Lys-Gly) (interchain with G-Cter in SUMO2); alternate cross-link involves residue Lys810. A Glycyl lysine isopeptide (Lys-Gly) (interchain with G-Cter in SUMO2) cross-link involves residue Lys1206. The disordered stretch occupies residues 1219–1282 (SQKMKKAKEQ…SLKGAEGQLQ (64 aa)). A compositionally biased stretch (basic and acidic residues) spans 1228–1248 (QRHLHNKEHFRAKQKEEEEKL). Basic residues predominate over residues 1249-1259 (KRQKDLRKKLF).

This sequence belongs to the TRAFAC class translation factor GTPase superfamily. Bms1-like GTPase family. BMS1 subfamily. As to quaternary structure, part of the small subunit (SSU) processome, composed of more than 70 proteins and the RNA chaperone small nucleolar RNA (snoRNA) U3. Interacts with RCL1.

The protein resides in the nucleus. The protein localises to the nucleolus. It carries out the reaction GTP + H2O = GDP + phosphate + H(+). Functionally, GTPase required for the synthesis of 40S ribosomal subunits and for processing of pre-ribosomal RNA (pre-rRNA) at sites A0, A1, and A2. Controls access of pre-rRNA intermediates to RCL1 during ribosome biogenesis by binding RCL1 in a GTP-dependent manner, and delivering it to pre-ribosomes. GTP-binding and/or GTP hydrolysis may induce conformational rearrangements within the BMS1-RCL1 complex allowing the interaction of RCL1 with its RNA substrate. Required for RCL1 import into the nucleus. The polypeptide is Ribosome biogenesis protein BMS1 homolog (Homo sapiens (Human)).